The sequence spans 467 residues: Sialic acid-binding Ig-like lectin 7 (467 aa).

Residues M1–G18 form the signal peptide. The Extracellular segment spans residues Q19 to L353. In terms of domain architecture, Ig-like V-type spans G39 to F122. The cysteines at positions 46 and 106 are disulfide-linked. N-linked (GlcNAc...) asparagine glycosylation is present at N105. N-acetylneuraminate-binding positions include R124 and K131 to K135. 2 N-linked (GlcNAc...) asparagine glycosylation sites follow: N142 and N165. The region spanning P150–Q233 is the Ig-like C2-type 1 domain. C168 and C217 are disulfide-bonded. 4 N-linked (GlcNAc...) asparagine glycosylation sites follow: N229, N235, N242, and N260. One can recognise an Ig-like C2-type 2 domain in the interval P240–S336. C276 and C320 are oxidised to a cystine. N334 carries N-linked (GlcNAc...) asparagine glycosylation. Residues G354–V376 form a helical membrane-spanning segment. Residues R377–K467 are Cytoplasmic-facing. A compositionally biased stretch (polar residues) spans I401 to E412. Residues I401–E431 are disordered. S429 carries the phosphoserine modification. The ITIM motif signature appears at I435–L440. A disordered region spans residues H443–K467. Positions L450–Y460 are enriched in polar residues.

The protein belongs to the immunoglobulin superfamily. SIGLEC (sialic acid binding Ig-like lectin) family. In terms of assembly, interacts with PTPN6/SHP-1 upon phosphorylation. Post-translationally, tyrosine phosphorylated. As to expression, predominantly expressed by resting and activated natural killer cells and at lower levels by granulocytes and monocytes. High expression found in placenta, liver, lung, spleen, and peripheral blood leukocytes.

It localises to the membrane. In terms of biological role, putative adhesion molecule that mediates sialic-acid dependent binding to cells. Preferentially binds to alpha-2,3- and alpha-2,6-linked sialic acid. Also binds disialogangliosides (disialogalactosyl globoside, disialyl lactotetraosylceramide and disialyl GalNAc lactotetraoslylceramide). The sialic acid recognition site may be masked by cis interactions with sialic acids on the same cell surface. In the immune response, may act as an inhibitory receptor upon ligand induced tyrosine phosphorylation by recruiting cytoplasmic phosphatase(s) via their SH2 domain(s) that block signal transduction through dephosphorylation of signaling molecules. Mediates inhibition of natural killer cells cytotoxicity. May play a role in hemopoiesis. Inhibits differentiation of CD34+ cell precursors towards myelomonocytic cell lineage and proliferation of leukemic myeloid cells (in vitro). The chain is Sialic acid-binding Ig-like lectin 7 (SIGLEC7) from Homo sapiens (Human).